Reading from the N-terminus, the 449-residue chain is Glucose-6-phosphate isomerase (449 aa).

Catalysis depends on Glu291, which acts as the Proton donor. Residues His312 and Lys426 contribute to the active site.

The protein belongs to the GPI family.

The protein localises to the cytoplasm. The catalysed reaction is alpha-D-glucose 6-phosphate = beta-D-fructose 6-phosphate. Its pathway is carbohydrate biosynthesis; gluconeogenesis. It functions in the pathway carbohydrate degradation; glycolysis; D-glyceraldehyde 3-phosphate and glycerone phosphate from D-glucose: step 2/4. Catalyzes the reversible isomerization of glucose-6-phosphate to fructose-6-phosphate. This chain is Glucose-6-phosphate isomerase, found in Streptococcus pyogenes serotype M2 (strain MGAS10270).